The following is a 596-amino-acid chain: Elongation factor 4 (596 aa).

Positions 2–184 constitute a tr-type G domain; sequence KHIRNFSIIA…TIVAQIPPPE (183 aa). GTP is bound by residues 14–19 and 131–134; these read DHGKST and NKID.

The protein belongs to the TRAFAC class translation factor GTPase superfamily. Classic translation factor GTPase family. LepA subfamily.

Its subcellular location is the cell inner membrane. It catalyses the reaction GTP + H2O = GDP + phosphate + H(+). Functionally, required for accurate and efficient protein synthesis under certain stress conditions. May act as a fidelity factor of the translation reaction, by catalyzing a one-codon backward translocation of tRNAs on improperly translocated ribosomes. Back-translocation proceeds from a post-translocation (POST) complex to a pre-translocation (PRE) complex, thus giving elongation factor G a second chance to translocate the tRNAs correctly. Binds to ribosomes in a GTP-dependent manner. The sequence is that of Elongation factor 4 from Shewanella loihica (strain ATCC BAA-1088 / PV-4).